We begin with the raw amino-acid sequence, 129 residues long: S-adenosylmethionine decarboxylase proenzyme (129 aa).

The active-site Schiff-base intermediate with substrate; via pyruvic acid is Ser63. Ser63 is modified (pyruvic acid (Ser); by autocatalysis). His68 acts as the Proton acceptor; for processing activity in catalysis. The active-site Proton donor; for catalytic activity is the Cys83.

Belongs to the prokaryotic AdoMetDC family. Type 1 subfamily. As to quaternary structure, heterotetramer of two alpha and two beta chains arranged as a dimer of alpha/beta heterodimers. It depends on pyruvate as a cofactor. Post-translationally, is synthesized initially as an inactive proenzyme. Formation of the active enzyme involves a self-maturation process in which the active site pyruvoyl group is generated from an internal serine residue via an autocatalytic post-translational modification. Two non-identical subunits are generated from the proenzyme in this reaction, and the pyruvate is formed at the N-terminus of the alpha chain, which is derived from the carboxyl end of the proenzyme. The post-translation cleavage follows an unusual pathway, termed non-hydrolytic serinolysis, in which the side chain hydroxyl group of the serine supplies its oxygen atom to form the C-terminus of the beta chain, while the remainder of the serine residue undergoes an oxidative deamination to produce ammonia and the pyruvoyl group blocking the N-terminus of the alpha chain.

The enzyme catalyses S-adenosyl-L-methionine + H(+) = S-adenosyl 3-(methylsulfanyl)propylamine + CO2. The protein operates within amine and polyamine biosynthesis; S-adenosylmethioninamine biosynthesis; S-adenosylmethioninamine from S-adenosyl-L-methionine: step 1/1. In terms of biological role, catalyzes the decarboxylation of S-adenosylmethionine to S-adenosylmethioninamine (dcAdoMet), the propylamine donor required for the synthesis of the polyamines spermine and spermidine from the diamine putrescine. The protein is S-adenosylmethionine decarboxylase proenzyme of Shouchella clausii (strain KSM-K16) (Alkalihalobacillus clausii).